A 337-amino-acid chain; its full sequence is Protein-arginine kinase (337 aa).

Residues 8–239 form the Phosphagen kinase C-terminal domain; sequence VVLSSRIRLA…KQIISSERRA (232 aa). ATP contacts are provided by residues 11–15, H76, R110, 161–165, and 192–197; these read SSRIR, RASVM, and RGIYGE. An RDXXRA motif of the pArg binding pocket involved in allosteric regulation motif is present at residues 321 to 326; that stretch reads RDVKRA.

Belongs to the ATP:guanido phosphotransferase family.

It carries out the reaction L-arginyl-[protein] + ATP = N(omega)-phospho-L-arginyl-[protein] + ADP + H(+). Appears to be allosterically activated by the binding of pArg-containing polypeptides to the pArg-binding pocket localized in the C-terminal domain of McsB. In terms of biological role, catalyzes the specific phosphorylation of arginine residues in proteins. This is Protein-arginine kinase from Caldanaerobacter subterraneus subsp. tengcongensis (strain DSM 15242 / JCM 11007 / NBRC 100824 / MB4) (Thermoanaerobacter tengcongensis).